Reading from the N-terminus, the 563-residue chain is Alpha-humulene synthase (563 aa).

Mg(2+)-binding residues include Asp-316, Asp-320, Asp-461, and Glu-469. The DDXXD motif signature appears at 316 to 320 (DDIYD).

The protein belongs to the terpene synthase family. Tpsa subfamily. It depends on Mg(2+) as a cofactor. Mn(2+) serves as cofactor. Expressed in trichomes, cones and young leaves.

It carries out the reaction (2E,6E)-farnesyl diphosphate = alpha-humulene + diphosphate. It participates in sesquiterpene biosynthesis. The protein operates within secondary metabolite biosynthesis; terpenoid biosynthesis. Sesquiterpene synthase that catalyzes the formation of alpha-humulene. Can use farnesyl diphosphate (FPP) as substrate, but not geranyl diphosphate (GPP) or geranylgeranyl diphosphate (GGPP). The polypeptide is Alpha-humulene synthase (Humulus lupulus (European hop)).